Consider the following 219-residue polypeptide: UPF0502 protein Gura_3445 (219 aa).

Positions 162–181 (AGEPDLPDDTPAPPPEPARQ) are disordered.

Belongs to the UPF0502 family.

This chain is UPF0502 protein Gura_3445, found in Geotalea uraniireducens (strain Rf4) (Geobacter uraniireducens).